We begin with the raw amino-acid sequence, 330 residues long: Putative [LysW]-L-2-aminoadipate/[LysW]-L-glutamate phosphate reductase (330 aa).

NADP(+) is bound by residues 10–13 (SGYI) and 34–36 (SRK). The active site involves Cys142. Asn297 lines the NADP(+) pocket.

It belongs to the NAGSA dehydrogenase family. Type 1 subfamily. LysY sub-subfamily.

The protein localises to the cytoplasm. It catalyses the reaction [amino-group carrier protein]-C-terminal-N-(1-carboxy-5-oxopentan-1-yl)-L-glutamine + phosphate + NADP(+) = [amino-group carrier protein]-C-terminal-N-(1-carboxy-5-phosphooxy-5-oxopentan-1-yl)-L-glutamine + NADPH + H(+). The enzyme catalyses [amino-group carrier protein]-C-terminal-gamma-(L-glutamyl-5-semialdehyde)-L-glutamate + phosphate + NADP(+) = [amino-group carrier protein]-C-terminal-gamma-(5-phospho-L-glutamyl)-L-glutamate + NADPH + H(+). Its pathway is amino-acid biosynthesis; L-lysine biosynthesis via AAA pathway; L-lysine from L-alpha-aminoadipate (Thermus route): step 3/5. It participates in amino-acid biosynthesis; L-arginine biosynthesis. Involved in both the arginine and lysine biosynthetic pathways. This is Putative [LysW]-L-2-aminoadipate/[LysW]-L-glutamate phosphate reductase from Pyrococcus abyssi (strain GE5 / Orsay).